The sequence spans 311 residues: Tyrosine recombinase XerD (311 aa).

The Core-binding (CB) domain maps to 2–95 (KTLALQLQGY…AVRGLHRFAA (94 aa)). A Tyr recombinase domain is found at 116–304 (RLPKSLTIDE…TVHALREVWA (189 aa)). Active-site residues include arginine 160, lysine 184, histidine 256, arginine 259, and histidine 282. The O-(3'-phospho-DNA)-tyrosine intermediate role is filled by tyrosine 291.

It belongs to the 'phage' integrase family. XerD subfamily. In terms of assembly, forms a cyclic heterotetrameric complex composed of two molecules of XerC and two molecules of XerD.

The protein resides in the cytoplasm. Its function is as follows. Site-specific tyrosine recombinase, which acts by catalyzing the cutting and rejoining of the recombining DNA molecules. The XerC-XerD complex is essential to convert dimers of the bacterial chromosome into monomers to permit their segregation at cell division. It also contributes to the segregational stability of plasmids. This chain is Tyrosine recombinase XerD, found in Mycobacterium tuberculosis (strain CDC 1551 / Oshkosh).